Consider the following 161-residue polypeptide: SsrA-binding protein (161 aa).

Belongs to the SmpB family.

The protein localises to the cytoplasm. In terms of biological role, required for rescue of stalled ribosomes mediated by trans-translation. Binds to transfer-messenger RNA (tmRNA), required for stable association of tmRNA with ribosomes. tmRNA and SmpB together mimic tRNA shape, replacing the anticodon stem-loop with SmpB. tmRNA is encoded by the ssrA gene; the 2 termini fold to resemble tRNA(Ala) and it encodes a 'tag peptide', a short internal open reading frame. During trans-translation Ala-aminoacylated tmRNA acts like a tRNA, entering the A-site of stalled ribosomes, displacing the stalled mRNA. The ribosome then switches to translate the ORF on the tmRNA; the nascent peptide is terminated with the 'tag peptide' encoded by the tmRNA and targeted for degradation. The ribosome is freed to recommence translation, which seems to be the essential function of trans-translation. This is SsrA-binding protein from Psychromonas ingrahamii (strain DSM 17664 / CCUG 51855 / 37).